A 139-amino-acid polypeptide reads, in one-letter code: MANSSSGLAVNDECKVKFRELKSRRTFRFIVFRIDDTDMEIKVDRLGEPNQGYGDFTDSLPANECRYAIYDLDFTTIENCQKSKIFFFSWSPDTARTRSKMLYASSKDRFRRELDGIQCEIQATDPSEMSLDIVRSRTN.

In terms of domain architecture, ADF-H spans 5–139; the sequence is SSGLAVNDEC…SLDIVRSRTN (135 aa).

The protein belongs to the actin-binding proteins ADF family. As to expression, expressed in pollen.

Its function is as follows. Actin-depolymerizing protein. Severs actin filaments (F-actin) and binds to actin monomers. The chain is Actin-depolymerizing factor 1 (ADF1) from Zea mays (Maize).